Consider the following 134-residue polypeptide: Small ribosomal subunit protein eS24A (134 aa).

Serine 2 bears the N-acetylserine mark. The interval 100 to 134 (IQKVARQQRKQRKNRGKKVFGTGKRLAKRKSKQQD) is disordered. Composition is skewed to basic residues over residues 105–117 (RQQRKQRKNRGKK) and 124–134 (RLAKRKSKQQD).

Belongs to the eukaryotic ribosomal protein eS24 family. As to quaternary structure, component of the small ribosomal subunit (SSU). Mature yeast ribosomes consist of a small (40S) and a large (60S) subunit. The 40S small subunit contains 1 molecule of ribosomal RNA (18S rRNA) and at least 33 different proteins. The large 60S subunit contains 3 rRNA molecules (25S, 5.8S and 5S rRNA) and at least 46 different proteins.

It is found in the cytoplasm. Its function is as follows. Component of the ribosome, a large ribonucleoprotein complex responsible for the synthesis of proteins in the cell. The small ribosomal subunit (SSU) binds messenger RNAs (mRNAs) and translates the encoded message by selecting cognate aminoacyl-transfer RNA (tRNA) molecules. The large subunit (LSU) contains the ribosomal catalytic site termed the peptidyl transferase center (PTC), which catalyzes the formation of peptide bonds, thereby polymerizing the amino acids delivered by tRNAs into a polypeptide chain. The nascent polypeptides leave the ribosome through a tunnel in the LSU and interact with protein factors that function in enzymatic processing, targeting, and the membrane insertion of nascent chains at the exit of the ribosomal tunnel. The polypeptide is Small ribosomal subunit protein eS24A (rps2401) (Schizosaccharomyces pombe (strain 972 / ATCC 24843) (Fission yeast)).